Here is an 87-residue protein sequence, read N- to C-terminus: MRSITWFIVFCVFMFIALNHVKGQVKPTGCQGGQRYRGKCGTNGTKTCVKDMMLPKLFKTKRCDCQDMLGTFKGWHFCTCYSGRPGC.

The signal sequence occupies residues 1–23 (MRSITWFIVFCVFMFIALNHVKG). 4 cysteine pairs are disulfide-bonded: Cys30–Cys87, Cys40–Cys65, Cys48–Cys78, and Cys63–Cys80.

This sequence belongs to the DEFL family.

It is found in the secreted. The chain is Putative defensin-like protein 238 (SCRL16) from Arabidopsis thaliana (Mouse-ear cress).